Reading from the N-terminus, the 295-residue chain is Protease HtpX (295 aa).

2 consecutive transmembrane segments (helical) span residues 4 to 24 and 42 to 62; these read ILLF…TLSL and QLLV…LFIS. H147 provides a ligand contact to Zn(2+). The active site involves E148. H151 is a Zn(2+) binding site. 2 helical membrane-spanning segments follow: residues 158–178 and 195–215; these read VTLA…ARII and IAYF…ASAI. E224 is a Zn(2+) binding site.

This sequence belongs to the peptidase M48B family. It depends on Zn(2+) as a cofactor.

The protein resides in the cell inner membrane. This is Protease HtpX from Pseudomonas fluorescens (strain SBW25).